Here is a 334-residue protein sequence, read N- to C-terminus: Ornithine carbamoyltransferase (334 aa).

Residues 57-60, Q84, R108, and 135-138 contribute to the carbamoyl phosphate site; these read STRT and HPTQ. Residues N169, D233, and 237–238 each bind L-ornithine; that span reads SM. Carbamoyl phosphate is bound by residues 275–276 and R320; that span reads CL.

It belongs to the aspartate/ornithine carbamoyltransferase superfamily. OTCase family.

The protein resides in the cytoplasm. It carries out the reaction carbamoyl phosphate + L-ornithine = L-citrulline + phosphate + H(+). It functions in the pathway amino-acid biosynthesis; L-arginine biosynthesis; L-arginine from L-ornithine and carbamoyl phosphate: step 1/3. Functionally, reversibly catalyzes the transfer of the carbamoyl group from carbamoyl phosphate (CP) to the N(epsilon) atom of ornithine (ORN) to produce L-citrulline. The polypeptide is Ornithine carbamoyltransferase (Vibrio cholerae serotype O1 (strain ATCC 39315 / El Tor Inaba N16961)).